The chain runs to 126 residues: Activated RNA polymerase II transcriptional coactivator p15 (126 aa).

The interval 1–63 is disordered; sequence MPKSKELVSS…QSSNRDENMF (63 aa). A regulatory region spans residues 2-50; sequence PKSKELVSSSSSASDSDSEVDKKAKRKKQAAPEKPVKKQKTGESSKGAA. The span at 7–16 shows a compositional bias: low complexity; it reads LVSSSSSASD. Positions 31 to 44 are enriched in basic and acidic residues; the sequence is AAPEKPVKKQKTGE. The span at 45–55 shows a compositional bias: low complexity; sequence SSKGAASSKQS. The tract at residues 76-100 is interaction with ssDNA; that stretch reads FKGKVLIDIREYWMDQEGEMKPGRK.

Belongs to the transcriptional coactivator PC4 family.

It localises to the nucleus. General coactivator that functions cooperatively with TAFs and mediates functional interactions between upstream activators and the general transcriptional machinery. May be involved in stabilizing the multiprotein transcription complex. Binds single-stranded DNA. Also binds, in vitro, non-specifically to double-stranded DNA (ds DNA). The chain is Activated RNA polymerase II transcriptional coactivator p15 (SUB1) from Gallus gallus (Chicken).